The primary structure comprises 274 residues: Large ribosomal subunit protein uL2 (274 aa).

A disordered region spans residues 223–256 (VAMNPVDHPHGGGEGRTSGGRHPVTPWGIPTKGY).

Belongs to the universal ribosomal protein uL2 family. As to quaternary structure, part of the 50S ribosomal subunit. Forms a bridge to the 30S subunit in the 70S ribosome.

One of the primary rRNA binding proteins. Required for association of the 30S and 50S subunits to form the 70S ribosome, for tRNA binding and peptide bond formation. It has been suggested to have peptidyltransferase activity; this is somewhat controversial. Makes several contacts with the 16S rRNA in the 70S ribosome. This Trichlorobacter lovleyi (strain ATCC BAA-1151 / DSM 17278 / SZ) (Geobacter lovleyi) protein is Large ribosomal subunit protein uL2.